The sequence spans 58 residues: Small ribosomal subunit protein bS21 (58 aa).

The tract at residues 35-58 (REHYESPSVRRKKKSEAARKRRYK) is disordered. The segment covering 43-58 (VRRKKKSEAARKRRYK) has biased composition (basic residues).

The protein belongs to the bacterial ribosomal protein bS21 family.

The sequence is that of Small ribosomal subunit protein bS21 from Acetivibrio thermocellus (strain ATCC 27405 / DSM 1237 / JCM 9322 / NBRC 103400 / NCIMB 10682 / NRRL B-4536 / VPI 7372) (Clostridium thermocellum).